The chain runs to 445 residues: tRNA-2-methylthio-N(6)-dimethylallyladenosine synthase (445 aa).

In terms of domain architecture, MTTase N-terminal spans 7 to 121 (KHFYIKSFGC…LPELIEKAAS (115 aa)). [4Fe-4S] cluster contacts are provided by Cys-16, Cys-52, Cys-84, Cys-156, Cys-160, and Cys-163. The Radical SAM core domain maps to 142–374 (RQVGASAFLT…QALLNQQQFD (233 aa)). Residues 377–438 (QQTIGRKATV…PNSVKGQFLD (62 aa)) form the TRAM domain.

The protein belongs to the methylthiotransferase family. MiaB subfamily. As to quaternary structure, monomer. Requires [4Fe-4S] cluster as cofactor.

The protein resides in the cytoplasm. The enzyme catalyses N(6)-dimethylallyladenosine(37) in tRNA + (sulfur carrier)-SH + AH2 + 2 S-adenosyl-L-methionine = 2-methylsulfanyl-N(6)-dimethylallyladenosine(37) in tRNA + (sulfur carrier)-H + 5'-deoxyadenosine + L-methionine + A + S-adenosyl-L-homocysteine + 2 H(+). Functionally, catalyzes the methylthiolation of N6-(dimethylallyl)adenosine (i(6)A), leading to the formation of 2-methylthio-N6-(dimethylallyl)adenosine (ms(2)i(6)A) at position 37 in tRNAs that read codons beginning with uridine. This chain is tRNA-2-methylthio-N(6)-dimethylallyladenosine synthase, found in Zymomonas mobilis subsp. mobilis (strain ATCC 31821 / ZM4 / CP4).